A 570-amino-acid polypeptide reads, in one-letter code: Hydroxylamine reductase (570 aa).

[4Fe-4S] cluster-binding residues include Cys-5, Cys-8, Cys-17, and Cys-23. His-266, Glu-290, Cys-334, Cys-425, Cys-453, Cys-478, Glu-513, and Lys-515 together coordinate hybrid [4Fe-2O-2S] cluster. A Cysteine persulfide modification is found at Cys-425.

Belongs to the HCP family. [4Fe-4S] cluster is required as a cofactor. It depends on hybrid [4Fe-2O-2S] cluster as a cofactor.

It localises to the cytoplasm. The enzyme catalyses A + NH4(+) + H2O = hydroxylamine + AH2 + H(+). Functionally, catalyzes the reduction of hydroxylamine to form NH(3) and H(2)O. The protein is Hydroxylamine reductase of Clostridium botulinum (strain Loch Maree / Type A3).